We begin with the raw amino-acid sequence, 668 residues long: DNA ligase (668 aa).

NAD(+) is bound by residues 34 to 38 (DTEYD), 83 to 84 (SL), and Glu114. The active-site N6-AMP-lysine intermediate is the Lys116. Arg137, Glu171, Lys286, and Lys310 together coordinate NAD(+). Positions 404, 407, 422, and 427 each coordinate Zn(2+). The 81-residue stretch at 588–668 (NSDSIIANKS…FFDLLKSEKG (81 aa)) folds into the BRCT domain.

It belongs to the NAD-dependent DNA ligase family. LigA subfamily. The cofactor is Mg(2+). It depends on Mn(2+) as a cofactor.

The enzyme catalyses NAD(+) + (deoxyribonucleotide)n-3'-hydroxyl + 5'-phospho-(deoxyribonucleotide)m = (deoxyribonucleotide)n+m + AMP + beta-nicotinamide D-nucleotide.. Functionally, DNA ligase that catalyzes the formation of phosphodiester linkages between 5'-phosphoryl and 3'-hydroxyl groups in double-stranded DNA using NAD as a coenzyme and as the energy source for the reaction. It is essential for DNA replication and repair of damaged DNA. The chain is DNA ligase from Mycoplasma mycoides subsp. mycoides SC (strain CCUG 32753 / NCTC 10114 / PG1).